The following is a 178-amino-acid chain: ATP synthase subunit delta (178 aa).

This sequence belongs to the ATPase delta chain family. As to quaternary structure, F-type ATPases have 2 components, F(1) - the catalytic core - and F(0) - the membrane proton channel. F(1) has five subunits: alpha(3), beta(3), gamma(1), delta(1), epsilon(1). F(0) has three main subunits: a(1), b(2) and c(10-14). The alpha and beta chains form an alternating ring which encloses part of the gamma chain. F(1) is attached to F(0) by a central stalk formed by the gamma and epsilon chains, while a peripheral stalk is formed by the delta and b chains.

It is found in the cell inner membrane. F(1)F(0) ATP synthase produces ATP from ADP in the presence of a proton or sodium gradient. F-type ATPases consist of two structural domains, F(1) containing the extramembraneous catalytic core and F(0) containing the membrane proton channel, linked together by a central stalk and a peripheral stalk. During catalysis, ATP synthesis in the catalytic domain of F(1) is coupled via a rotary mechanism of the central stalk subunits to proton translocation. In terms of biological role, this protein is part of the stalk that links CF(0) to CF(1). It either transmits conformational changes from CF(0) to CF(1) or is implicated in proton conduction. The polypeptide is ATP synthase subunit delta (Pseudomonas aeruginosa (strain UCBPP-PA14)).